Reading from the N-terminus, the 215-residue chain is Ribose-5-phosphate isomerase A (215 aa).

Substrate-binding positions include 26–29 (TGST), 79–82 (DGAD), and 92–95 (KGGG). Residue Glu-101 is the Proton acceptor of the active site. Lys-119 serves as a coordination point for substrate.

It belongs to the ribose 5-phosphate isomerase family. As to quaternary structure, homodimer.

The catalysed reaction is aldehydo-D-ribose 5-phosphate = D-ribulose 5-phosphate. It functions in the pathway carbohydrate degradation; pentose phosphate pathway; D-ribose 5-phosphate from D-ribulose 5-phosphate (non-oxidative stage): step 1/1. Functionally, catalyzes the reversible conversion of ribose-5-phosphate to ribulose 5-phosphate. The sequence is that of Ribose-5-phosphate isomerase A from Stenotrophomonas maltophilia (strain K279a).